The following is a 374-amino-acid chain: MEEMLESNEMIVHLGPQHPMQPGPFRLNLKLKGETIMDAEVEMGYIHKGIEKILENRTYLQGITIVDRICYLVALTNEECYVGCVEKLLDIEPPERAQYIRVILEELSRLQSHLLGLGEYGEFIGFVSMFMYTIKEREDILTLIDMVTGARVTHSYLRFGGVRDDLPEGFKEKTIPVLNKLKKVIRDYEEMFYSDTIYRERTIGIGVLTADEAKSLGVSGPVLRATGVPFDIRKNEPYLVYRDLDFKVCTETAGDCFARVQVRLNEMRESIYIIEQCLDMIPNGPIFPEGTPYGKRTPVMRVPAGEVFHRVEDPRGEMGMYMVSDGSDRPYRVKVRGPYYPTLQALPPLIIGTTVADMVSISGSMDGCTSEVDR.

This sequence belongs to the complex I 49 kDa subunit family. In terms of assembly, the FPO complex is composed of at least 13 different subunits.

Its subcellular location is the cell inner membrane. The enzyme catalyses methanophenazine + reduced coenzyme F420-(gamma-L-Glu)(n) = dihydromethanophenazine + oxidized coenzyme F420-(gamma-L-Glu)(n) + H(+). In terms of biological role, component of the F(420)H(2) dehydrogenase (FPO complex) which is part of the energy-conserving F(420)H(2):heterodisulfide oxidoreductase system. The membrane-bound electron transfer system of the complex plays an important role in the metabolism of methylotrophic methanogens when the organisms grow on methanol or methylamines. Catalyzes the oxidation of methanophenazine to dihydromethanophenazine. It shuttles electrons from F(420)H(2), via FAD and iron-sulfur (Fe-S) centers, to methanophenazine (an electron carrier in the membrane). It couples the redox reaction to proton translocation (for every two electrons transferred, two hydrogen ions are translocated across the cytoplasmic membrane), and thus conserves the redox energy in a proton gradient. It also catalyzes the oxidation of F(420)H(2) with quinones such as 2,3-dimethyl-1,4-naphthoquinone, 2-methyl-1,4-naphthoquinone and tetramethyl-p-benzoquinone. This is F(420)H(2) dehydrogenase subunit D (fpoD) from Methanosarcina mazei (strain ATCC BAA-159 / DSM 3647 / Goe1 / Go1 / JCM 11833 / OCM 88) (Methanosarcina frisia).